Reading from the N-terminus, the 251-residue chain is Protein CMS1 (251 aa).

The disordered stretch occupies residues 1–37 (MSLDNDINTKKRKLQDDEKPRKKRKHKRPTRDDDADL).

It belongs to the CMS1 family.

It localises to the nucleus. In terms of biological role, may play a role in the regulation of DNA replication and cell cycle control. This is Protein CMS1 (CSM1) from Chaetomium thermophilum (strain DSM 1495 / CBS 144.50 / IMI 039719) (Thermochaetoides thermophila).